A 141-amino-acid chain; its full sequence is Nucleoside diphosphate kinase (141 aa).

ATP is bound by residues Lys-11, Phe-59, Arg-87, Thr-93, Arg-104, and Asn-114. His-117 (pros-phosphohistidine intermediate) is an active-site residue.

It belongs to the NDK family. In terms of assembly, homotetramer. It depends on Mg(2+) as a cofactor.

Its subcellular location is the cytoplasm. The enzyme catalyses a 2'-deoxyribonucleoside 5'-diphosphate + ATP = a 2'-deoxyribonucleoside 5'-triphosphate + ADP. It carries out the reaction a ribonucleoside 5'-diphosphate + ATP = a ribonucleoside 5'-triphosphate + ADP. In terms of biological role, major role in the synthesis of nucleoside triphosphates other than ATP. The ATP gamma phosphate is transferred to the NDP beta phosphate via a ping-pong mechanism, using a phosphorylated active-site intermediate. The chain is Nucleoside diphosphate kinase from Pseudomonas entomophila (strain L48).